A 544-amino-acid chain; its full sequence is Chaperonin GroEL 2 (544 aa).

ATP is bound by residues 29-32, 86-90, Gly413, 479-481, and Asp495; these read TLGP, DGTTT, and NAA.

Belongs to the chaperonin (HSP60) family. Forms a cylinder of 14 subunits composed of two heptameric rings stacked back-to-back. Interacts with the co-chaperonin GroES.

Its subcellular location is the cytoplasm. It carries out the reaction ATP + H2O + a folded polypeptide = ADP + phosphate + an unfolded polypeptide.. Together with its co-chaperonin GroES, plays an essential role in assisting protein folding. The GroEL-GroES system forms a nano-cage that allows encapsulation of the non-native substrate proteins and provides a physical environment optimized to promote and accelerate protein folding. This chain is Chaperonin GroEL 2, found in Synechococcus sp. (strain CC9605).